We begin with the raw amino-acid sequence, 269 residues long: MSNRVQGGFDNNSGNNQSAQKQQAEKIPQITVPLNCFMINQIVKAAKENPQAHSGNHYEWYGAFENAIITAKFEFLQSINDSPKIMGKLSDSTGCIEVVIQKSKMSDELPEFVQAYEIELQNNGNRHKYVRAMLKMRKNAQIQLLYFSIVNDANEISRHGLDLCLRYLQRKHGIEDFMHMTNDKAHNNHNASAQKVHYQIDRNQQPKEQVLELMRQILKHNPNDQIPKSKIIEFFQSQLNQVQINQILQQLVSANEIFSVGSDNYLLNV.

Over residues 1 to 22 the composition is skewed to polar residues; that stretch reads MSNRVQGGFDNNSGNNQSAQKQ. The disordered stretch occupies residues 1–25; that stretch reads MSNRVQGGFDNNSGNNQSAQKQQAE. A DNA-binding region (OB) is located at residues 69 to 149; the sequence is ITAKFEFLQS…AQIQLLYFSI (81 aa).

It belongs to the replication factor A protein 2 family. Component of the replication protein A complex (RPA), a heterotrimeric complex composed of RPA1, RPA2/TEB2 and RPA3/TEB3. Component of the telomerase holoenzyme complex, composed of the catalytic core (the catalytic subunit TERT, the telomerase RNA template component TER and TAP65/p65), which is associated with two heterotrimeric subcomplexes: (i) the replication protein A (RPA)-related subcomplex, composed of TEB1, RPA2/TEB2 and RPA3/TEB3 and (ii) the CST-like subcomplex, composed of TAP75/p75, TAP45/p45 and TAP19/p19. TEB1 and the CST-like subcomplex are tethered to the catalytic core by TAP50/p50.

The protein resides in the nucleus. It is found in the chromosome. Its subcellular location is the telomere. Functionally, component of the heterotrimeric replication protein A (RPA) and holoenzyme telomerase ribonucleoprotein complexes. As part of the RPA complex, binds and stabilizes single-stranded DNA (ssDNA) intermediates, that form during DNA replication or upon DNA stress. It prevents their reannealing and in parallel, recruits and activates different proteins and complexes involved in DNA metabolism. Thereby, it plays an essential role both in DNA replication and the cellular response to DNA damage. In the cellular response to DNA damage, the RPA complex controls DNA repair and DNA damage checkpoint activation. Also part of a subcomplex of the holoenzyme telomerase ribonucleoprotein complex: this subcomplex that contains TEB1, RPA2/TEB2, RPA3/TEB3, but not RPA1, mediates the recruitment of telomerase to telomeric DNA via specific interaction between TEB1 and telomeric ssDNA. In the holoenzyme telomerase ribonucleoprotein complex, RPA2/TEB2 and RPA3/TEB3 act as assembly factors for TEB1 incorporation into telomerase holoenzyme. In the holoenzyme telomerase ribonucleoprotein complex, RPA2/TEB2 does not contribute to ssDNA affinity, while it contributes to ssDNA affinity in the RPA complex. The chain is Replication protein A 32 kDa subunit (RPA2) from Tetrahymena thermophila (strain SB210).